Consider the following 235-residue polypeptide: MMLNSDYLNLLDLMQITNANFPIGTFSHSFGIETYIRKDIVFDGDSLIRALLLYMNEQLLHGDLLAIYQIFKLLPKQKINAIWEIDQMINFQGLARETREGQRRIGQQMVKIYNELFDCELLVEYAQRIKDRKSYGNPAVAFALLAMHLKIDLKTALYTHLYSTVAALTQNCVRAIPLGQVKGQKIIHKLKHVYFDDIIDKVFSLDFKTDFCKNIPGLEIAQMEHEDTPVRLFMS.

It belongs to the UreF family. In terms of assembly, ureD, UreF and UreG form a complex that acts as a GTP-hydrolysis-dependent molecular chaperone, activating the urease apoprotein by helping to assemble the nickel containing metallocenter of UreC. The UreE protein probably delivers the nickel.

Its subcellular location is the cytoplasm. In terms of biological role, required for maturation of urease via the functional incorporation of the urease nickel metallocenter. The protein is Urease accessory protein UreF of Ureaplasma urealyticum serovar 10 (strain ATCC 33699 / Western).